Consider the following 472-residue polypeptide: Gamma-aminobutyric acid receptor subunit beta-2 (472 aa).

Residues 1-23 (RVRKKDYFGIWSFPLIIAAVCAQ) form the signal peptide. The Extracellular portion of the chain corresponds to 24 to 239 (SVNDPSNMSL…LSLSFKLKRN (216 aa)). N-linked (GlcNAc...) asparagine glycosylation is found at Asn-30 and Asn-102. Residue Tyr-119 participates in histamine binding. Cys-158 and Cys-172 are oxidised to a cystine. Residues 178 to 179 (SY) and Thr-224 each bind histamine. 4-aminobutanoate contacts are provided by Tyr-179 and Thr-224. A run of 3 helical transmembrane segments spans residues 240–260 (IGYFILQTYMPSILITILSWV), 271–290 (ARVALGITTVLTMTTINTHL), and 309–329 (GCFVFVFMALLEYALVNYIFF). The segment at 287–308 (NTHLRETLPKIPYVKAIDMYLM) is etomidate binding; allosteric effector. At 330 to 450 (GRGPQRQKKA…LTDVNAIDRW (121 aa)) the chain is on the cytoplasmic side. Tyr-401 carries the phosphotyrosine modification. Residues 451–471 (SRIFFPVVFSFFNIVYWLYYV) form a helical membrane-spanning segment.

This sequence belongs to the ligand-gated ion channel (TC 1.A.9) family. Gamma-aminobutyric acid receptor (TC 1.A.9.5) subfamily. GABRB2 sub-subfamily. Heteropentamer, formed by a combination of alpha (GABRA1-6), beta (GABRB1-3), gamma (GABRG1-3), delta (GABRD), epsilon (GABRE), rho (GABRR1-3), pi (GABRP) and theta (GABRQ) chains, each subunit exhibiting distinct physiological and pharmacological properties. Interacts with UBQLN1. May interact with KIF21B. Identified in a complex of 720 kDa composed of LHFPL4, NLGN2, GABRA1, GABRB2, GABRG2 and GABRB3. Glycosylated.

The protein localises to the postsynaptic cell membrane. It localises to the cell membrane. It is found in the cytoplasmic vesicle membrane. The catalysed reaction is chloride(in) = chloride(out). Allosterically activated by benzodiazepines. Allosterically activated by the anesthetic etomidate. Inhibited by the antagonist bicuculline. Potentiated by histamine. Functionally, beta subunit of the heteropentameric ligand-gated chloride channel gated by gamma-aminobutyric acid (GABA), a major inhibitory neurotransmitter in the brain. GABA-gated chloride channels, also named GABA(A) receptors (GABAAR), consist of five subunits arranged around a central pore and contain GABA active binding site(s) located at the alpha and beta subunit interface(s). When activated by GABA, GABAARs selectively allow the flow of chloride anions across the cell membrane down their electrochemical gradient. Chloride influx into the postsynaptic neuron following GABAAR opening decreases the neuron ability to generate a new action potential, thereby reducing nerve transmission. GABAARs containing alpha-1 and beta-2 or -3 subunits exhibit synaptogenic activity; the gamma-2 subunit being necessary but not sufficient to induce rapid synaptic contacts formation. Extrasynaptic beta-2 receptors contribute to the tonic GABAergic inhibition. Beta-containing GABAARs can simultaneously bind GABA and histamine where histamine binds at the interface of two neighboring beta subunits, which may be involved in the regulation of sleep and wakefulness. The chain is Gamma-aminobutyric acid receptor subunit beta-2 (GABRB2) from Bos taurus (Bovine).